A 570-amino-acid polypeptide reads, in one-letter code: Methionine--tRNA ligase (570 aa).

The 'HIGH' region signature appears at 11 to 21; sequence PYVQTVPHLGN. Zn(2+) is bound by residues Cys143, Cys146, Cys156, and Cys159. Residues 333 to 337 carry the 'KMSKS' region motif; it reads KFSKS. An ATP-binding site is contributed by Lys336.

It belongs to the class-I aminoacyl-tRNA synthetase family. MetG type 1 subfamily. Requires Zn(2+) as cofactor.

Its subcellular location is the cytoplasm. The enzyme catalyses tRNA(Met) + L-methionine + ATP = L-methionyl-tRNA(Met) + AMP + diphosphate. Its function is as follows. Is required not only for elongation of protein synthesis but also for the initiation of all mRNA translation through initiator tRNA(fMet) aminoacylation. The protein is Methionine--tRNA ligase of Pyrobaculum arsenaticum (strain DSM 13514 / JCM 11321 / PZ6).